The following is a 342-amino-acid chain: Aldo-keto reductase pigE (342 aa).

The N-terminal stretch at 1 to 27 (MGSISPKTRFPIVLGAGLIGSPGLFEG) is a signal peptide. D52 lines the NADP(+) pocket. Y57 (proton donor) is an active-site residue. Residues Q182 and R236 each coordinate NADP(+). N-linked (GlcNAc...) asparagine glycosylation is present at N271.

This sequence belongs to the aldo/keto reductase family. Aldo/keto reductase 2 subfamily.

The protein operates within secondary metabolite biosynthesis. Aldo-keto reductase; part of the gene cluster that mediates the biosynthesis of azaphilone pigments (MonAzPs), a complex mixture of compounds with a common azaphilone skeleton very widely used as food colorants. Within the pathway, pigE is involved in the dehydration of the C-11 alcohol followed by the reduction of the C6(7) double bond which increases the electrophilicity of the C-5 ketone of the resulting acyl benzopyran and allows the intramolecular Knoevenagel aldol condensation with the C-20 enol of the side chain to yield the characteristic linear tricyclic carbon skeletons of the yellow pigments. The first step of the pathway is performed by the nrPKS pigA that forms the hexaketide precursor from successive condensations of five malonyl-CoA units, with a simple acetyl-CoA starter unit. The role of esterase pigG is not clear, but it may play at most a supplementary role in the formation of the benzaldehyde produced by the pigA nrPKS. This very reactive benzaldehyde is intercepted by the pigC ketoreductase that to provide the first stable enzyme-free MonAzPs intermediate, 6-(4-hydroxy-2-oxopentyl)-3-methyl-2,4-dioxocyclohexane carbaldehyde, also known as M7PKS-1. The FAD-dependent monooxygenase pigN hydroxylates M7PKS-1 at C-4, which triggers the formation of the pyran ring. PigJ, pigK and pigD are involved in the acetylation of the pyran ring. PigJ and pigK form the two subunits of a dedicated fungal FAS that produces the side chain fatty acyl moiety of MonAzPs and pigD transfers the fatty acyl chain to the C-4 alcohol. PigM and pigO are involved in the elimination of the omega-1 alcohol. PigM acts as an O-acetyltransferase that synthesizes the putative O-11 acetyl intermediate whereas pigO eliminates acetic acid to yield an intermediate with a C10(11) double bond. The dehydration of the C-11 alcohol followed by the reduction of the C6(7) double bond by the NAD(P)H-dependent oxidoreductase pigE increases the electrophilicity of the C-5 ketone of the resulting acyl benzopyran. This in turn sets up the C-5 ketone for an intramolecular Knoevenagel aldol condensation with the C-20 enol of the side chain. This condensation affords the characteristic linear tricyclic carbon skeletons of the yellow pigments that serve as the common precursors for the classical yellow pigments monascin and ankaflavin, orange pigments rubopunctatin and monascorubrin, and red pigments ribropunctamine and monascorubramine. The FAD-dependent oxidoreductase pigF is especially invoved in the biosynthesis of orange and red pigments via desaturation of C6(7). This is Aldo-keto reductase pigE from Monascus ruber (Mold).